We begin with the raw amino-acid sequence, 437 residues long: MSALLPRLLTRTAFKASGKLLRLSSVISRTFSQTTTSYAAAFDRSKPHVNIGTIGHVDHGKTTLTAAITKTLAAKGGANFLDYAAIDKAPEERARGITISTAHVEYETAKRHYSHVDCPGHADYIKNMITGAAQMDGAIIVVAATDGQMPQTREHLLLARQVGVQHIVVFVNKVDTIDDPEMLELVEMEMRELLNEYGFDGDNAPIIMGSALCALEGRQPEIGEQAIMKLLDAVDEYIPTPERDLNKPFLMPVEDIFSISGRGTVVTGRVERGNLKKGEELEIVGHNSTPLKTTVTGIEMFRKELDSAMAGDNAGVLLRGIRRDQLKRGMVLAKPGTVKAHTKILASLYILSKEEGGRHSGFGENYRPQMFIRTADVTVVMRFPKEVEDHSMQVMPGDNVEMECDLIHPTPLEVGQRFNIREGGRTVGTGLITRIIE.

The transit peptide at M1–Y38 directs the protein to the mitochondrion. Residues K46 to E242 enclose the tr-type G domain. Positions G55–T62 are G1. G55–T62 provides a ligand contact to GTP. Residues G96 to S100 form a G2 region. A G3 region spans residues D117–G120. GTP-binding positions include D117 to H121 and N172 to D175. Residues N172 to D175 are G4. The interval S210 to L212 is G5.

The protein belongs to the TRAFAC class translation factor GTPase superfamily. Classic translation factor GTPase family. EF-Tu/EF-1A subfamily. The precursor is processed in two steps involving mitochondrial intermediate peptidase (MIP) and mitochondrial processing peptidase (MPP).

Its subcellular location is the mitochondrion. It participates in protein biosynthesis; polypeptide chain elongation. G-protein that, in its active GTP-bound form, binds to and delivers aminoacyl-tRNA to the A-site of ribosomes during protein biosynthesis. In the presence of a correct codon-anticodon match between the aminoacyl-tRNA and the A-site codon of the ribosome-bound mRNA, the ribosome acts as a GTPase activator and the GTP is hydrolyzed. The inactive GDP-bound form leaves the ribosome and must be recycled before binding another molecule of aminoacyl-tRNA. Required for mitochondrial protein biosynthesis and maintenance of mitochondrial DNA. The sequence is that of Elongation factor Tu, mitochondrial (TUF1) from Saccharomyces cerevisiae (strain ATCC 204508 / S288c) (Baker's yeast).